The primary structure comprises 289 residues: N-acetylmuramoyl-L-alanine amidase AmiA (289 aa).

The segment at residues Met1–Ala34 is a signal peptide (tat-type signal). The interval Leu39 to Pro63 is disordered. Positions Ser46–Gly55 are enriched in basic residues. The MurNAc-LAA domain occupies Val59–Ile273.

It belongs to the N-acetylmuramoyl-L-alanine amidase 3 family. In terms of processing, exported by the Tat system. The position of the signal peptide cleavage has not been experimentally proven. Can also be exported by the Sec system.

Its subcellular location is the periplasm. The catalysed reaction is Hydrolyzes the link between N-acetylmuramoyl residues and L-amino acid residues in certain cell-wall glycopeptides.. In terms of biological role, cell-wall hydrolase involved in septum cleavage during cell division. Can also act as powerful autolysin in the presence of murein synthesis inhibitors. The chain is N-acetylmuramoyl-L-alanine amidase AmiA (amiA) from Escherichia coli (strain K12).